The primary structure comprises 147 residues: Membrane-spanning 4-domains subfamily A member 6E (147 aa).

Over Met1–Ser52 the chain is Cytoplasmic. Residues Ser53–Val73 form a helical membrane-spanning segment. Over Asn74 to Thr120 the chain is Extracellular. A helical membrane pass occupies residues Leu121–Leu141. Residues Gln142–Val147 are Cytoplasmic-facing.

This sequence belongs to the MS4A family. Expressed by malignant and fetal tissue at very low levels.

It localises to the membrane. Its function is as follows. May be involved in signal transduction as a component of a multimeric receptor complex. This chain is Membrane-spanning 4-domains subfamily A member 6E (MS4A6E), found in Homo sapiens (Human).